The following is a 149-amino-acid chain: Large ribosomal subunit protein uL11 (149 aa).

The protein belongs to the universal ribosomal protein uL11 family. As to quaternary structure, part of the ribosomal stalk of the 50S ribosomal subunit. Interacts with L10 and the large rRNA to form the base of the stalk. L10 forms an elongated spine to which L12 dimers bind in a sequential fashion forming a multimeric L10(L12)X complex. One or more lysine residues are methylated.

In terms of biological role, forms part of the ribosomal stalk which helps the ribosome interact with GTP-bound translation factors. The protein is Large ribosomal subunit protein uL11 of Methylobacterium nodulans (strain LMG 21967 / CNCM I-2342 / ORS 2060).